The chain runs to 348 residues: Heat-inducible transcription repressor HrcA (348 aa).

This sequence belongs to the HrcA family.

In terms of biological role, negative regulator of class I heat shock genes (grpE-dnaK-dnaJ and groELS operons). Prevents heat-shock induction of these operons. This chain is Heat-inducible transcription repressor HrcA, found in Thermomicrobium roseum (strain ATCC 27502 / DSM 5159 / P-2).